We begin with the raw amino-acid sequence, 449 residues long: Tubulin alpha-2 chain (449 aa).

The GTP site is built by glutamine 11, glutamate 71, serine 140, glycine 144, threonine 145, threonine 179, asparagine 206, and asparagine 228. Glutamate 71 provides a ligand contact to Mg(2+). Residue glutamate 254 is part of the active site.

The protein belongs to the tubulin family. Dimer of alpha and beta chains. A typical microtubule is a hollow water-filled tube with an outer diameter of 25 nm and an inner diameter of 15 nM. Alpha-beta heterodimers associate head-to-tail to form protofilaments running lengthwise along the microtubule wall with the beta-tubulin subunit facing the microtubule plus end conferring a structural polarity. Microtubules usually have 13 protofilaments but different protofilament numbers can be found in some organisms and specialized cells. Mg(2+) serves as cofactor.

The protein resides in the cytoplasm. It localises to the cytoskeleton. It catalyses the reaction GTP + H2O = GDP + phosphate + H(+). Tubulin is the major constituent of microtubules, a cylinder consisting of laterally associated linear protofilaments composed of alpha- and beta-tubulin heterodimers. Microtubules grow by the addition of GTP-tubulin dimers to the microtubule end, where a stabilizing cap forms. Below the cap, tubulin dimers are in GDP-bound state, owing to GTPase activity of alpha-tubulin. The sequence is that of Tubulin alpha-2 chain (tub1) from Schizosaccharomyces pombe (strain 972 / ATCC 24843) (Fission yeast).